Here is a 385-residue protein sequence, read N- to C-terminus: Deoxyguanosinetriphosphate triphosphohydrolase-like protein (385 aa).

Positions 75–204 constitute an HD domain; the sequence is RLTHSLEVAQ…INFADEIAYN (130 aa).

It belongs to the dGTPase family. Type 2 subfamily.

The polypeptide is Deoxyguanosinetriphosphate triphosphohydrolase-like protein (Geobacter sulfurreducens (strain ATCC 51573 / DSM 12127 / PCA)).